Reading from the N-terminus, the 239-residue chain is Ribosomal RNA small subunit methyltransferase G (239 aa).

S-adenosyl-L-methionine is bound by residues glycine 78, phenylalanine 83, 129 to 130 (AE), and arginine 148.

Belongs to the methyltransferase superfamily. RNA methyltransferase RsmG family.

Its subcellular location is the cytoplasm. Specifically methylates the N7 position of a guanine in 16S rRNA. The sequence is that of Ribosomal RNA small subunit methyltransferase G from Clostridium botulinum (strain Okra / Type B1).